The following is a 637-amino-acid chain: 1-deoxy-D-xylulose-5-phosphate synthase (637 aa).

Residues His-74 and 115 to 117 each bind thiamine diphosphate; that span reads GHS. Asp-146 contacts Mg(2+). Residues 147 to 148, Asn-175, Tyr-285, and Glu-366 each bind thiamine diphosphate; that span reads GA. Asn-175 contributes to the Mg(2+) binding site.

Belongs to the transketolase family. DXPS subfamily. Homodimer. Mg(2+) serves as cofactor. Requires thiamine diphosphate as cofactor.

The enzyme catalyses D-glyceraldehyde 3-phosphate + pyruvate + H(+) = 1-deoxy-D-xylulose 5-phosphate + CO2. It functions in the pathway metabolic intermediate biosynthesis; 1-deoxy-D-xylulose 5-phosphate biosynthesis; 1-deoxy-D-xylulose 5-phosphate from D-glyceraldehyde 3-phosphate and pyruvate: step 1/1. In terms of biological role, catalyzes the acyloin condensation reaction between C atoms 2 and 3 of pyruvate and glyceraldehyde 3-phosphate to yield 1-deoxy-D-xylulose-5-phosphate (DXP). This Pelotomaculum thermopropionicum (strain DSM 13744 / JCM 10971 / SI) protein is 1-deoxy-D-xylulose-5-phosphate synthase.